Reading from the N-terminus, the 218-residue chain is Octanoyltransferase (218 aa).

Residues 30 to 213 (GEIEDTLILV…YFSEVFNYDI (184 aa)) enclose the BPL/LPL catalytic domain. Substrate-binding positions include 75-82 (RGGDVTYH), 143-145 (AIG), and 156-158 (GFA). Residue cysteine 174 is the Acyl-thioester intermediate of the active site.

It belongs to the LipB family.

It localises to the cytoplasm. The catalysed reaction is octanoyl-[ACP] + L-lysyl-[protein] = N(6)-octanoyl-L-lysyl-[protein] + holo-[ACP] + H(+). It functions in the pathway protein modification; protein lipoylation via endogenous pathway; protein N(6)-(lipoyl)lysine from octanoyl-[acyl-carrier-protein]: step 1/2. Functionally, catalyzes the transfer of endogenously produced octanoic acid from octanoyl-acyl-carrier-protein onto the lipoyl domains of lipoate-dependent enzymes. Lipoyl-ACP can also act as a substrate although octanoyl-ACP is likely to be the physiological substrate. In Alkaliphilus metalliredigens (strain QYMF), this protein is Octanoyltransferase.